We begin with the raw amino-acid sequence, 288 residues long: MEGLLIALIPMFAWGSIGFVSNKIGGRPNQQTFGMTLGALLFAIIVWLFKQPEMTASLWIFGILGGILWSVGQNGQFQAMKYMGVSVANPLSSGAQLVGGSLVGALVFHEWTKPIQFILGLTALTLLVIGFYFSSKRDVSEQALATHQEFSKGFATIAYSTVGYISYAVLFNNIMKFDAMAVILPMAVGMCLGAICFMKFRVNFEAVVVKNMITGLMWGVGNVFMLLAAAKAGLAIAFSFSQLGVIISIIGGILFLGETKTKKEQKWVVMGILCFVMGAILLGIVKSY.

10 helical membrane-spanning segments follow: residues 4-26 (LLIA…KIGG), 33-50 (FGMT…WLFK), 55-72 (TASL…WSVG), 85-107 (VSVA…GALV), 117-134 (FILG…FYFS), 154-171 (FATI…AVLF), 181-200 (AVIL…FMKF), 207-229 (VVVK…LLAA), 234-256 (LAIA…ILFL), and 268-285 (VVMG…LGIV).

Belongs to the GRP transporter (TC 2.A.7.5) family.

The protein resides in the cell membrane. This Streptococcus agalactiae serotype III (strain NEM316) protein is Putative sugar uptake protein gbs2116.